We begin with the raw amino-acid sequence, 1119 residues long: MGDPVSSKRKSSVSDAVSTSKRQHQQVKVEDVNVPLSSREHSPGPQLHTQQSYYGNGTDGASESALTQSRNNNGATSVVAISDATQNGEDSSNISNNSNAVSKGKAVVNAGHRPVTSCTHCRQHKIKCNASEKFPAPCSRCERMGLHCEIDPQFRPKKGSQLQSLRNDVDELKVKIEYLTRNESLIAKALKQSNIGQNLLQAIKSVDFSYRVAGPTQGQVAKNKISVQTYLTNEPQLLQDSQTTTTNPTTSSNSKVVTPTGSDHSPASHNGGSLSSGKPQLLNDSVPANTKDRLPPVLQIALKRLSQQISSSSPQNSSPTTTGHSPANDLSSSKQHVVATTNAMPLLPSPHANIDEFVLGDVHISIEKATELHNIFVARFLPYFPIMQSNSATELYSQSQLLFWTVILTASLSDPEPTLYNKLSSLIKQLAIETCWIRTPRSTHISQALLILCNWPLPNQKVLDDCSYRFVGLAKSLSFQLGLHRGKFMTEFTRTQTSLPEAEKWRTRTWLGIFFAEQLWASILGLPPTSQTDYLIEKARLGDDGELPPILRKLICLANFQGKLCNVMGTSVVSPDGLMDARERAGSLAILERELERLDVKLKFQEDAAVEIYFLYIKLMICCFAFLPETPTEDQTKYVTEAYLCATKIITLLTKLLETQQLIELPIYIRHSATYSALILFKLYLTPLLLDKYVDSARQSIVTVHRLYRNQLTAWAASVENDISRTASVLEKLNFVLVTHPEVFIEEEGIISRMRSHLTGTLFYDLVWCVHEARRRQMDPNYDAEAAKRNKEKWFKNRRKLYPLPFYNQISKEDFETITQTTPGGTTVTTLVPTKSAIKQAKQLAQSQGDQNGPVTHINGIPLSMLDETGSVNIEGLLANANLNLSNEHSTVLASSSSTATRLNADNPTTDTNKFNVQTVFTHNIKKSSKSSDTPTNKPKFNSTSSIPTATPTSEQRAAHNTKTSASILTGDPNSLFSMNNSLQANIQLNKTLSADSNGTSNNNIPNSTAPLNTPDTNSFNSLTRSPDAPSYGNMNVFYNAANQGTNMNTLYSQSVPNAPQGISAPLSAQPVNVTNIPNGNVNSELDDFFLRQSAGWIEGNSSNDDFLGWFDMNMAPEF.

2 disordered regions span residues 1-70 (MGDP…TQSR) and 86-105 (QNGE…SKGK). Residues 47–70 (LHTQQSYYGNGTDGASESALTQSR) are compositionally biased toward polar residues. Positions 118-148 (CTHCRQHKIKCNASEKFPAPCSRCERMGLHC) form a DNA-binding region, zn(2)-C6 fungal-type. Disordered regions lie at residues 236-290 (QLLQ…PANT), 306-335 (SQQI…SSKQ), 894-913 (ASSS…TDTN), 926-962 (KKSS…AHNT), and 994-1018 (SADS…PDTN). Positions 243–260 (TTTTNPTTSSNSKVVTPT) are enriched in low complexity. Positions 261-288 (GSDHSPASHNGGSLSSGKPQLLNDSVPA) are enriched in polar residues. The segment covering 306–322 (SQQISSSSPQNSSPTTT) has biased composition (low complexity). Composition is skewed to polar residues over residues 323–335 (GHSP…SSKQ), 902–913 (RLNADNPTTDTN), and 931–942 (SSDTPTNKPKFN). Residues 943 to 954 (STSSIPTATPTS) show a composition bias toward low complexity.

It is found in the nucleus. Putative transcription factor. Suppresses the lethal phenotype of RPM2 deletion. The protein is Putative transcription factor SEF1 (SEF1) of Kluyveromyces lactis (strain ATCC 8585 / CBS 2359 / DSM 70799 / NBRC 1267 / NRRL Y-1140 / WM37) (Yeast).